We begin with the raw amino-acid sequence, 421 residues long: Vinorine synthase (421 aa).

Active-site proton acceptor residues include H160 and D362.

This sequence belongs to the plant acyltransferase family. As to quaternary structure, monomer. Mainly expressed in roots and, to a lower level, in leaves.

It carries out the reaction 16-epivellosimine + acetyl-CoA = vinorine + CoA. It participates in alkaloid biosynthesis; ajmaline biosynthesis. Its activity is regulated as follows. Complete inhibition by 4-(2-aminoethyl)-benzenesulfonyl fluoride (AEBSF), N-tosyl-L-phenylalanine chloromethylketone (TPCK), Hg(2+) and diethyl-pyrocarbonate (DEPC). 50% inhibition by N-(N-(L-3-trans-carboxirane-2-carbonyl)-L-leucyl)-agmanitine (E-64), N-alpha-p-tosyl-L-lysine chloromethylketone (TLCK) and phenylmethylsulfonyl fluoride (PMSF). Its function is as follows. Acetyltransferase involved in the biosynthesis of ajmaline-type monoterpenoid indole alkaloids (MIAs) natural products, important plant-derived pharmaceuticals used in the therapy of heart disorders. Catalyzes the conversion of 16-epivellosimine to vinorine, precursor of vomilenine, an intermediate chemical in the biosynthesis of ajmaline. Acts on gardneral, but not on polyneuridine aldehyde or N-methylgardneral. This chain is Vinorine synthase, found in Rauvolfia serpentina (Serpentine wood).